Here is a 354-residue protein sequence, read N- to C-terminus: Guanine nucleotide-binding protein G(o) subunit alpha (354 aa).

Gly2 is lipidated: N-myristoyl glycine. Cys3 carries the S-palmitoyl cysteine lipid modification. Residues 32 to 354 enclose the G-alpha domain; it reads KDVKLLLLGA…ANNLRGCGLY (323 aa). The G1 motif stretch occupies residues 35–48; sequence KLLLLGAGESGKST. GTP is bound by residues Glu43, Lys46, Ser47, Thr48, Ser152, Leu176, Arg177, Thr178, and Arg179. Ser47 contributes to the Mg(2+) binding site. The interval 174–182 is G2 motif; that stretch reads DILRTRVKT. Position 182 (Thr182) interacts with Mg(2+). Residues 197–206 form a G3 motif region; sequence FRLFDVGGQR. At Gln205 the chain carries 5-glutamyl histamine. Residues 266–273 form a G4 motif region; it reads ILFLNKKD. GTP-binding residues include Asn270, Asp273, and Cys325. A G5 motif region spans residues 324–329; that stretch reads TCATDT. A lipid anchor (S-palmitoyl cysteine) is attached at Cys351.

The protein belongs to the G-alpha family. G(i/o/t/z) subfamily. As to quaternary structure, g proteins are composed of 3 units; alpha, beta and gamma. The alpha chain contains the guanine nucleotide binding site. Forms a complex with GNB1 and GNG3. Interacts with RGS14. Interacts with RGS16. Interacts with RGS19. Interacts (when palmitoylated) with ADGRG3. Histaminylated at Gln-205 residues by TGM2.

The protein resides in the cell membrane. The protein localises to the membrane. The enzyme catalyses GTP + H2O = GDP + phosphate + H(+). With respect to regulation, the GTPase activity is promoted by GTPAse activators, such as RGS14, RGS16 and RGS19. In terms of biological role, guanine nucleotide-binding proteins (G proteins) function as transducers downstream of G protein-coupled receptors (GPCRs) in numerous signaling cascades. The alpha chain contains the guanine nucleotide binding site and alternates between an active, GTP-bound state and an inactive, GDP-bound state. Signaling by an activated GPCR promotes GDP release and GTP binding. The alpha subunit has a low GTPase activity that converts bound GTP to GDP, thereby terminating the signal. Both GDP release and GTP hydrolysis are modulated by numerous regulatory proteins. Signaling is mediated via effector proteins, such as adenylate cyclase. Inhibits adenylate cyclase activity, leading to decreased intracellular cAMP levels. This Bos taurus (Bovine) protein is Guanine nucleotide-binding protein G(o) subunit alpha (GNAO1).